Reading from the N-terminus, the 271-residue chain is MNEETGIPDDNLLTIEQAIANLQSEDLGLRVYAAWWLGRFRVNVPEAIDLLIAALADEADRTEAGGYPLRRNAARALGKLGDRRAVPALITSLECDDFYVREAVAQSLEMLGDNSCVPYLIELIKNPNPEASADTEPEHPYDAFLEALGTLGAVKAIPHILPFLDHPIPKVQYAAARAMYQLSEPMVADQYGDRLVAALANDDLQLRRTVLSDLGAIGYLSAAEAIGNTMAENSLKLISLKGLLEKQIVLATPPDLTDGAIRVMALMDDLL.

Belongs to the CpcE/RpcE/PecE family. CpcE and CpcF associate to form a lyase.

Functionally, required for the chromophorylation of the cpcA1 gene product. The chain is Phycocyanobilin lyase subunit alpha (cpcE1) from Pseudanabaena tenuis (strain PCC 7409).